The following is a 278-amino-acid chain: NAD-dependent protein deacylase (278 aa).

Positions 22 to 270 constitute a Deacetylase sirtuin-type domain; it reads RSRIFHRDSA…PEYIREFLTT (249 aa). 46–65 is an NAD(+) binding site; that stretch reads GAGISAESGIRTFRADDGLW. 2 residues coordinate substrate: tyrosine 90 and arginine 93. Residue 127 to 130 coordinates NAD(+); it reads QNID. The active-site Proton acceptor is the histidine 145. The Zn(2+) site is built by cysteine 153 and cysteine 172. NAD(+) contacts are provided by residues 212–214, 238–240, and alanine 256; these read GTS and NLE.

This sequence belongs to the sirtuin family. Class III subfamily. The cofactor is Zn(2+).

It localises to the cytoplasm. It catalyses the reaction N(6)-acetyl-L-lysyl-[protein] + NAD(+) + H2O = 2''-O-acetyl-ADP-D-ribose + nicotinamide + L-lysyl-[protein]. It carries out the reaction N(6)-succinyl-L-lysyl-[protein] + NAD(+) + H2O = 2''-O-succinyl-ADP-D-ribose + nicotinamide + L-lysyl-[protein]. The enzyme catalyses N(6)-(2-hydroxyisobutanoyl)-L-lysyl-[protein] + NAD(+) + H2O = 2''-O-(2-hydroxyisobutanoyl)-ADP-D-ribose + nicotinamide + L-lysyl-[protein]. Its function is as follows. NAD-dependent lysine deacetylase that specifically removes acetyl groups on target proteins. Also acts as a protein-lysine deacylase by mediating protein desuccinylation and de-2-hydroxyisobutyrylation. Modulates the activities of several proteins which are inactive in their acylated form. In Yersinia pestis, this protein is NAD-dependent protein deacylase.